A 271-amino-acid chain; its full sequence is Centromere protein K (271 aa).

Coiled coils occupy residues 11 to 44 (DTITDVEAVIDTEEELIKECEEMWKDMEDCQNKL) and 102 to 151 (LRCD…VENQ).

Belongs to the CENP-K/MCM22 family. As to quaternary structure, component of the CENPA-CAD complex, composed of CENPI, CENPK, CENPL, CENPO, CENPP, CENPQ, CENPR and CENPS. The CENPA-CAD complex interacts with the CENPA-NAC complex, at least composed of CENPA, CENPC, CENPH, CENPM, CENPN, CENPT and CENPU. May interact with Sox6. In terms of tissue distribution, highly expressed in testis.

It localises to the nucleus. The protein resides in the chromosome. Its subcellular location is the centromere. It is found in the kinetochore. Functionally, component of the CENPA-CAD (nucleosome distal) complex, a complex recruited to centromeres which is involved in assembly of kinetochore proteins, mitotic progression and chromosome segregation. May be involved in incorporation of newly synthesized CENPA into centromeres via its interaction with the CENPA-NAC complex. Acts in coordination with KNL1 to recruit the NDC80 complex to the outer kinetochore. The polypeptide is Centromere protein K (Cenpk) (Mus musculus (Mouse)).